Reading from the N-terminus, the 376-residue chain is 1-acyl-sn-glycerol-3-phosphate acyltransferase gamma (376 aa).

Topologically, residues 1-124 (MGLLAFLKTQ…LGSSKVLAKK (124 aa)) are cytoplasmic. An HXXXXD motif motif is present at residues 96 to 101 (HNFEID). Residues 125 to 145 (ELLYVPLIGWTWYFLEIVFCK) traverse the membrane as a helical segment. Topologically, residues 146 to 316 (RKWEEDRDTV…TLLNFLSWAT (171 aa)) are lumenal. Residues 317–339 (ILLSPLFSFVLGVFASGSPLLIL) traverse the membrane as a helical segment. Residues 340-376 (TFLGFVGAASFGVRRLIGVTEIEKGSSYGNQEFKKKE) are Cytoplasmic-facing.

This sequence belongs to the 1-acyl-sn-glycerol-3-phosphate acyltransferase family.

It is found in the endoplasmic reticulum membrane. Its subcellular location is the nucleus envelope. It carries out the reaction a 1-acyl-sn-glycero-3-phosphate + an acyl-CoA = a 1,2-diacyl-sn-glycero-3-phosphate + CoA. It catalyses the reaction pentadecanoyl-CoA + 1-(9Z-octadecenoyl)-sn-glycero-3-phosphate = 1-(9Z)-octadecenoyl-2-pentadecanoyl-sn-glycero-3-phosphate + CoA. The enzyme catalyses heptadecanoyl-CoA + 1-(9Z-octadecenoyl)-sn-glycero-3-phosphate = 1-(9Z)-octadecenoyl-2-heptadecanoyl-sn-glycero-3-phosphate + CoA. The catalysed reaction is 1-(9Z-octadecenoyl)-sn-glycero-3-phosphate + octadecanoyl-CoA = 1-(9Z-octadecenoyl)-2-octadecanoyl-sn-glycero-3-phosphate + CoA. It carries out the reaction nonadecanoyl-CoA + 1-(9Z-octadecenoyl)-sn-glycero-3-phosphate = 1-(9Z)-octadecenoyl-2-nonadecanoyl-sn-glycero-3-phosphate + CoA. It catalyses the reaction 1-(9Z-octadecenoyl)-sn-glycero-3-phosphate + (5Z,8Z,11Z,14Z)-eicosatetraenoyl-CoA = 1-(9Z)-octadecenoyl-2-(5Z,8Z,11Z,14Z)-eicosatetraenoyl-sn-glycero-3-phosphate + CoA. The enzyme catalyses 1-(9Z-octadecenoyl)-sn-glycero-3-phosphate + (9Z)-octadecenoyl-CoA = 1,2-di-(9Z-octadecenoyl)-sn-glycero-3-phosphate + CoA. The catalysed reaction is 1-(9Z-octadecenoyl)-sn-glycero-3-phosphate + (9Z,12Z)-octadecadienoyl-CoA = 1-(9Z)-octadecenoyl-2-(9Z,12Z)-octadecadienoyl-sn-glycero-3-phosphate + CoA. It carries out the reaction 1-(9Z-octadecenoyl)-sn-glycero-3-phosphocholine + (5Z,8Z,11Z,14Z)-eicosatetraenoyl-CoA = 1-(9Z)-octadecenoyl-2-(5Z,8Z,11Z,14Z)-icosatetraenoyl-sn-glycero-3-phosphocholine + CoA. It catalyses the reaction 1-(9Z-octadecenoyl)-sn-glycero-3-phospho-(1D-myo-inositol) + (5Z,8Z,11Z,14Z)-eicosatetraenoyl-CoA = 1-(9Z-octadecenoyl)-2-(5Z,8Z,11Z,14Z-eicosatetraenoyl)-sn-glycero-3-phospho-1D-myo-inositol + CoA. The enzyme catalyses 1-(9Z-octadecenoyl)-sn-glycero-3-phospho-L-serine + (5Z,8Z,11Z,14Z)-eicosatetraenoyl-CoA = 1-(9Z-octadecenoyl)-2-(5Z,8Z,11Z,14Z-eicosatetraenoyl)-sn-glycero-3-phospho-L-serine + CoA. The catalysed reaction is 1-hexadecanoyl-sn-glycero-3-phosphate + (9Z)-octadecenoyl-CoA = 1-hexadecanoyl-2-(9Z-octadecenoyl)-sn-glycero-3-phosphate + CoA. It carries out the reaction 1-hexadecanoyl-sn-glycero-3-phosphate + (5Z,8Z,11Z,14Z)-eicosatetraenoyl-CoA = 1-hexadecanoyl-2-(5Z,8Z,11Z,14Z-eicosatetraenoyl)-sn-glycero-3-phosphate + CoA. It catalyses the reaction 1-heptadecanoyl-sn-glycero-3-phosphate + (5Z,8Z,11Z,14Z)-eicosatetraenoyl-CoA = 1-heptadecanoyl-2-(5Z,8Z,11Z,14Z)-eicosatetraenoyl-sn-glycero-3-phosphate + CoA. The enzyme catalyses 1-octadecanoyl-sn-glycero-3-phosphate + (9Z)-octadecenoyl-CoA = 1-octadecanoyl-2-(9Z-octadecenoyl)-sn-glycero-3-phosphate + CoA. The catalysed reaction is 1-octadecanoyl-sn-glycero-3-phosphate + (5Z,8Z,11Z,14Z)-eicosatetraenoyl-CoA = 1-octadecanoyl-2-(5Z,8Z,11Z,14Z-eicosatetraenoyl)-sn-glycero-3-phosphate + CoA. It carries out the reaction 1-(9Z-octadecenoyl)-sn-glycero-3-phosphate + hexadecanoyl-CoA = 1-hexadecanoyl-2-(9Z-octadecenoyl)-sn-glycero-3-phosphate + CoA. It catalyses the reaction 1-O-(9Z-octadecenyl)-sn-glycero-3-phosphate + (5Z,8Z,11Z,14Z)-eicosatetraenoyl-CoA = 1-O-(9Z-octadecenyl)-2-(5Z,8Z,11Z,14Z-eicosatetraenoyl)-sn-glycero-3-phosphate + CoA. The enzyme catalyses a 1-acyl-sn-glycero-3-phospho-(1D-myo-inositol) + (5Z,8Z,11Z,14Z)-eicosatetraenoyl-CoA = a 1-acyl-2-(5Z,8Z,11Z,14Z-eicosatetraenoyl)-sn-glycero-3-phospho-(1D-myo-inositol) + CoA. It functions in the pathway phospholipid metabolism; CDP-diacylglycerol biosynthesis; CDP-diacylglycerol from sn-glycerol 3-phosphate: step 2/3. Its function is as follows. Converts 1-acyl-sn-glycerol-3-phosphate (lysophosphatidic acid or LPA) into 1,2-diacyl-sn-glycerol-3-phosphate (phosphatidic acid or PA) by incorporating an acyl moiety at the sn-2 position of the glycerol backbone. Acts on LPA containing saturated or unsaturated fatty acids C16:0-C20:4 at the sn-1 position using C18:1, C20:4 or C18:2-CoA as the acyl donor. Also acts on lysophosphatidylcholine, lysophosphatidylinositol and lysophosphatidylserine using C18:1 or C20:4-CoA. Has a preference for arachidonoyl-CoA as a donor. Also has a modest lysophosphatidylinositol acyltransferase (LPIAT) activity, converts lysophosphatidylinositol (LPI) into phosphatidylinositol. The sequence is that of 1-acyl-sn-glycerol-3-phosphate acyltransferase gamma (AGPAT3) from Pongo abelii (Sumatran orangutan).